A 346-amino-acid polypeptide reads, in one-letter code: Very-long-chain 3-oxoacyl-CoA reductase (346 aa).

A helical membrane pass occupies residues 26 to 46 (GASALLAAGSLFVVSRALVFV). NADP(+) contacts are provided by V71, D126, D134, N153, Y220, K224, I253, and S255. Residue Y220 is the Proton donor of the active site. K224 serves as the catalytic Lowers pKa of active site Tyr.

It belongs to the short-chain dehydrogenases/reductases (SDR) family.

Its subcellular location is the endoplasmic reticulum membrane. The catalysed reaction is a very-long-chain (3R)-3-hydroxyacyl-CoA + NADP(+) = a very-long-chain 3-oxoacyl-CoA + NADPH + H(+). The protein operates within lipid metabolism; fatty acid biosynthesis. Its function is as follows. Component of the microsomal membrane bound fatty acid elongation system, which produces the 26-carbon very long-chain fatty acids (VLCFA) from palmitate. Catalyzes the reduction of the 3-ketoacyl-CoA intermediate that is formed in each cycle of fatty acid elongation. VLCFAs serve as precursors for ceramide and sphingolipids. This chain is Very-long-chain 3-oxoacyl-CoA reductase, found in Aspergillus niger (strain ATCC MYA-4892 / CBS 513.88 / FGSC A1513).